The sequence spans 214 residues: External core antigen (214 aa).

A signal peptide spans 1 to 19 (MQLFHLCLIISCTCPTLQA). Positions 25–27 (GWL) are HBEAG. The segment at 164–214 (PNAPILSTLPETTVVRRRDRGRSPRRRTPSPRRRRSQSPRRRRSQSRESQC) is disordered. Basic residues predominate over residues 178–207 (VRRRDRGRSPRRRTPSPRRRRSQSPRRRRS). The stretch at 186 to 192 (SPRRRTP) is one 1; half-length repeat. Positions 186–208 (SPRRRTPSPRRRRSQSPRRRRSQ) are 3 X 8 AA repeats of S-P-R-R-R-R-S-Q. A propeptide spanning residues 186–214 (SPRRRTPSPRRRRSQSPRRRRSQSRESQC) is cleaved from the precursor. A run of 2 repeats spans residues 193–200 (SPRRRRSQ) and 201–208 (SPRRRRSQ).

It belongs to the orthohepadnavirus precore antigen family. Homodimerizes. Phosphorylated. In terms of processing, cleaved by host furin.

The protein localises to the secreted. The protein resides in the host nucleus. Its function is as follows. May regulate immune response to the intracellular capsid in acting as a T-cell tolerogen, by having an immunoregulatory effect which prevents destruction of infected cells by cytotoxic T-cells. This immune regulation may predispose to chronicity during perinatal infections and prevent severe liver injury during adult infections. This Homo sapiens (Human) protein is External core antigen.